The sequence spans 1141 residues: Serine-aspartate repeat-containing protein E (1141 aa).

The first 52 residues, Met1–Ala52, serve as a signal peptide directing secretion. Residues Phe23–Ser34 carry the YSIRK-G/S signaling motif motif. A ligand binding A region region spans residues Ala53–Lys601. The segment at Glu54–Pro248 is disordered. Basic and acidic residues predominate over residues Ala61 to Val75. Residues Glu77 to Asn90 show a composition bias toward low complexity. Positions Ile92–Ser108 are enriched in basic and acidic residues. The span at Thr109–Thr126 shows a compositional bias: low complexity. Over residues Asn130–Thr145 the composition is skewed to basic and acidic residues. Residues Asn159–Thr207 are compositionally biased toward polar residues. Residues Ser216–Thr241 are compositionally biased toward basic and acidic residues. CNA-B domains lie at Leu602–Pro714, Lys715–Pro824, and Lys825–Thr935. The tract at residues Gly929–Ala1117 is disordered. The segment covering Tyr930 to Ser1080 has biased composition (acidic residues). The LPXTG sorting signal signature appears at Leu1104–Gly1108. Pentaglycyl murein peptidoglycan amidated threonine is present on Thr1107. Positions Gly1108–Lys1141 are cleaved as a propeptide — removed by sortase.

It belongs to the serine-aspartate repeat-containing protein (SDr) family. In terms of assembly, interacts with host complement factor H/CFAH (via C-terminus). Interacts with host complement regulator C4BPA.

The protein localises to the secreted. The protein resides in the cell wall. In terms of biological role, cell surface-associated calcium-binding protein which plays an important role in adhesion and pathogenesis. Contributes to the resistance to killing by innate immune components in blood and thus attenuates bacterial clearance by interacting with host complement factor H/CFAH and modulating its activity. Inhibits also bacterial opsonization and killing by interacting with host complement regulator C4BPA and thus inhibiting classical complement pathway activation. The polypeptide is Serine-aspartate repeat-containing protein E (sdrE) (Staphylococcus aureus (strain Mu50 / ATCC 700699)).